The primary structure comprises 370 residues: Phosphate acyltransferase (370 aa).

The protein belongs to the PlsX family. In terms of assembly, homodimer. Probably interacts with PlsY.

It localises to the cytoplasm. It catalyses the reaction a fatty acyl-[ACP] + phosphate = an acyl phosphate + holo-[ACP]. It participates in lipid metabolism; phospholipid metabolism. Functionally, catalyzes the reversible formation of acyl-phosphate (acyl-PO(4)) from acyl-[acyl-carrier-protein] (acyl-ACP). This enzyme utilizes acyl-ACP as fatty acyl donor, but not acyl-CoA. The chain is Phosphate acyltransferase from Polaromonas naphthalenivorans (strain CJ2).